We begin with the raw amino-acid sequence, 298 residues long: Small ribosomal subunit protein uS2 (298 aa).

A disordered region spans residues 240–298 (AGENWDTQAPGAGVPGSAFAAASAAAATSWEADGGDWAASSAPPAGESWAETQPTEAKW). Low complexity predominate over residues 248–271 (APGAGVPGSAFAAASAAAATSWEA). Over residues 289-298 (AETQPTEAKW) the composition is skewed to polar residues.

This sequence belongs to the universal ribosomal protein uS2 family. Component of the small ribosomal subunit. Mature ribosomes consist of a small (40S) and a large (60S) subunit. The 40S subunit contains about 33 different proteins and 1 molecule of RNA (18S). The 60S subunit contains about 49 different proteins and 3 molecules of RNA (25S, 5.8S and 5S). Interacts with rps21.

The protein resides in the cytoplasm. Functionally, required for the assembly and/or stability of the 40S ribosomal subunit. Required for the processing of the 20S rRNA-precursor to mature 18S rRNA in a late step of the maturation of 40S ribosomal subunits. The chain is Small ribosomal subunit protein uS2 (rps0) from Aspergillus clavatus (strain ATCC 1007 / CBS 513.65 / DSM 816 / NCTC 3887 / NRRL 1 / QM 1276 / 107).